The primary structure comprises 219 residues: Probable GTP-binding protein EngB (219 aa).

The EngB-type G domain maps to 40 to 212 (LLPEIAFIGK…KASLAKCIIK (173 aa)). GTP is bound by residues 48–55 (GKSNVGKS), 75–79 (GRTGQ), 93–96 (DLPG), 160–163 (TKFD), and 191–193 (VSS). Mg(2+)-binding residues include S55 and T77.

It belongs to the TRAFAC class TrmE-Era-EngA-EngB-Septin-like GTPase superfamily. EngB GTPase family. Mg(2+) is required as a cofactor.

In terms of biological role, necessary for normal cell division and for the maintenance of normal septation. The polypeptide is Probable GTP-binding protein EngB (Rickettsia canadensis (strain McKiel)).